We begin with the raw amino-acid sequence, 327 residues long: GMP reductase (327 aa).

Cys176 serves as the catalytic Thioimidate intermediate. NADP(+) is bound at residue 205 to 228; that stretch reads IIADGGIRTHGDIAKSIRFGATMV.

The protein belongs to the IMPDH/GMPR family. GuaC type 2 subfamily.

The enzyme catalyses IMP + NH4(+) + NADP(+) = GMP + NADPH + 2 H(+). In terms of biological role, catalyzes the irreversible NADPH-dependent deamination of GMP to IMP. It functions in the conversion of nucleobase, nucleoside and nucleotide derivatives of G to A nucleotides, and in maintaining the intracellular balance of A and G nucleotides. This chain is GMP reductase, found in Streptococcus equi subsp. equi (strain 4047).